The primary structure comprises 498 residues: 3-octaprenyl-4-hydroxybenzoate carboxy-lyase (498 aa).

Asn-177 contributes to the Mn(2+) binding site. Residues 180–182 (IYR), 194–196 (RWL), and 199–200 (RG) contribute to the prenylated FMN site. Residue Glu-243 participates in Mn(2+) binding. Asp-292 functions as the Proton donor in the catalytic mechanism.

The protein belongs to the UbiD family. As to quaternary structure, homohexamer. Prenylated FMN serves as cofactor. The cofactor is Mn(2+).

It is found in the cell membrane. It catalyses the reaction a 4-hydroxy-3-(all-trans-polyprenyl)benzoate + H(+) = a 2-(all-trans-polyprenyl)phenol + CO2. Its pathway is cofactor biosynthesis; ubiquinone biosynthesis. Functionally, catalyzes the decarboxylation of 3-octaprenyl-4-hydroxy benzoate to 2-octaprenylphenol, an intermediate step in ubiquinone biosynthesis. This is 3-octaprenyl-4-hydroxybenzoate carboxy-lyase from Methylococcus capsulatus (strain ATCC 33009 / NCIMB 11132 / Bath).